The following is a 640-amino-acid chain: DNA mismatch repair protein MutL (640 aa).

2 disordered regions span residues 332–353 (PNVQ…FNFP) and 408–431 (PAHT…TFHD).

Belongs to the DNA mismatch repair MutL/HexB family.

Its function is as follows. This protein is involved in the repair of mismatches in DNA. It is required for dam-dependent methyl-directed DNA mismatch repair. May act as a 'molecular matchmaker', a protein that promotes the formation of a stable complex between two or more DNA-binding proteins in an ATP-dependent manner without itself being part of a final effector complex. This chain is DNA mismatch repair protein MutL, found in Chloroherpeton thalassium (strain ATCC 35110 / GB-78).